The following is a 178-amino-acid chain: Large ribosomal subunit protein uL6 (178 aa).

It belongs to the universal ribosomal protein uL6 family. Part of the 50S ribosomal subunit.

In terms of biological role, this protein binds to the 23S rRNA, and is important in its secondary structure. It is located near the subunit interface in the base of the L7/L12 stalk, and near the tRNA binding site of the peptidyltransferase center. This Listeria innocua serovar 6a (strain ATCC BAA-680 / CLIP 11262) protein is Large ribosomal subunit protein uL6.